A 290-amino-acid chain; its full sequence is Hydroxyacylglutathione hydrolase-like protein (290 aa).

Zn(2+)-binding residues include His-54, His-56, Asp-58, His-59, His-110, Asp-134, and His-172.

The protein belongs to the metallo-beta-lactamase superfamily. Glyoxalase II family. It depends on Zn(2+) as a cofactor.

Hydrolase acting on ester bonds. The protein is Hydroxyacylglutathione hydrolase-like protein (HAGHL) of Homo sapiens (Human).